Consider the following 136-residue polypeptide: Large ribosomal subunit protein uL16 (136 aa).

Belongs to the universal ribosomal protein uL16 family. In terms of assembly, part of the 50S ribosomal subunit.

Functionally, binds 23S rRNA and is also seen to make contacts with the A and possibly P site tRNAs. This chain is Large ribosomal subunit protein uL16, found in Enterobacter sp. (strain 638).